Consider the following 631-residue polypeptide: Leukocyte immunoglobulin-like receptor subfamily B member 3 (631 aa).

The first 23 residues, 1–23, serve as a signal peptide directing secretion; it reads MTPALTALLCLGLSLGPRTRVQA. Over 24–443 the chain is Extracellular; that stretch reads GPFPKPTLWA…STPGLGRYLE (420 aa). Ig-like C2-type domains are found at residues 42–100, 111–229, 225–314, and 338–419; these read GSPV…RCHY, DPLE…SLLT, PSLL…DPLN, and GENV…LVVS. A disulfide bridge links C49 with C98. Over residues 59 to 70 the composition is skewed to basic and acidic residues; that stretch reads RLHKEGSPEPLD. A disordered region spans residues 59-78; the sequence is RLHKEGSPEPLDRNNPLEPK. The N-linked (GlcNAc...) asparagine glycan is linked to N139. Cystine bridges form between C144–C196 and C245–C296. 3 N-linked (GlcNAc...) asparagine glycosylation sites follow: N280, N301, and N340. A disulfide bridge connects residues C345 and C396. A helical membrane pass occupies residues 444 to 464; that stretch reads VLIGVSVAFVLLLFLLLFLLL. Residues 465-631 are Cytoplasmic-facing; that stretch reads RRQRHSKHRT…PSIYATLAIH (167 aa). Residues 470–631 form a disordered region; sequence SKHRTSDQRK…PSIYATLAIH (162 aa). Over residues 473–482 the composition is skewed to basic and acidic residues; the sequence is RTSDQRKTDF. An ITIM motif 1 motif is present at residues 512-517; the sequence is NLYAAV. 2 stretches are compositionally biased toward basic and acidic residues: residues 520-537 and 567-581; these read TQSEDRVELDSQSPHDED and LDTKDRQVEEDRQMD. Positions 588-600 are enriched in polar residues; sequence EASQDVTYAQLHS. 2 consecutive short sequence motifs (ITIM motif) follow at residues 593–598 and 623–628; these read VTYAQL and SIYATL. 2 positions are modified to phosphotyrosine; by LYN: Y595 and Y625.

As to quaternary structure, interacts with LYN, PTPN6/SHP-1 and PTPN11/SHP-2. In terms of processing, phosphorylated on tyrosine residues by LYN. Phosphorylation at Tyr-595 and Tyr-625 is important for interaction with PTPN6/SHP-1 and PTPN11/SHP-2. As to expression, detected in monocytes and B-cells.

The protein resides in the cell membrane. Functionally, may act as receptor for class I MHC antigens. Becomes activated upon coligation of LILRB3 and immune receptors, such as FCGR2B and the B-cell receptor. Down-regulates antigen-induced B-cell activation by recruiting phosphatases to its immunoreceptor tyrosine-based inhibitor motifs (ITIM). This is Leukocyte immunoglobulin-like receptor subfamily B member 3 (LILRB3) from Homo sapiens (Human).